The chain runs to 172 residues: Large ribosomal subunit protein uL10 (172 aa).

This sequence belongs to the universal ribosomal protein uL10 family. Part of the ribosomal stalk of the 50S ribosomal subunit. The N-terminus interacts with L11 and the large rRNA to form the base of the stalk. The C-terminus forms an elongated spine to which L12 dimers bind in a sequential fashion forming a multimeric L10(L12)X complex.

Functionally, forms part of the ribosomal stalk, playing a central role in the interaction of the ribosome with GTP-bound translation factors. The protein is Large ribosomal subunit protein uL10 of Chlorobium chlorochromatii (strain CaD3).